We begin with the raw amino-acid sequence, 145 residues long: 3-dehydroquinate dehydratase 2 (145 aa).

The Proton acceptor role is filled by Tyr-22. Positions 73, 79, and 86 each coordinate substrate. His-101 serves as the catalytic Proton donor. Substrate contacts are provided by residues 102-103 (IS) and Arg-112.

It belongs to the type-II 3-dehydroquinase family. As to quaternary structure, homododecamer.

It carries out the reaction 3-dehydroquinate = 3-dehydroshikimate + H2O. It functions in the pathway metabolic intermediate biosynthesis; chorismate biosynthesis; chorismate from D-erythrose 4-phosphate and phosphoenolpyruvate: step 3/7. Functionally, catalyzes a trans-dehydration via an enolate intermediate. In Corynebacterium efficiens (strain DSM 44549 / YS-314 / AJ 12310 / JCM 11189 / NBRC 100395), this protein is 3-dehydroquinate dehydratase 2 (aroQ2).